A 304-amino-acid polypeptide reads, in one-letter code: Large ribosomal subunit protein uL2 (304 aa).

The tract at residues 246 to 282 is disordered; it reads HTRGTAMNPVDHPHGGGEGRTRGKHPESPWGWKTKGY. The span at 256–272 shows a compositional bias: basic and acidic residues; that stretch reads DHPHGGGEGRTRGKHPE.

This sequence belongs to the universal ribosomal protein uL2 family. Part of the 50S ribosomal subunit. Forms a bridge to the 30S subunit in the 70S ribosome.

Functionally, one of the primary rRNA binding proteins. Required for association of the 30S and 50S subunits to form the 70S ribosome, for tRNA binding and peptide bond formation. It has been suggested to have peptidyltransferase activity; this is somewhat controversial. Makes several contacts with the 16S rRNA in the 70S ribosome. The protein is Large ribosomal subunit protein uL2 of Aquifex aeolicus (strain VF5).